The chain runs to 407 residues: Phosphopentomutase (407 aa).

Positions 11, 305, 310, 346, 347, and 358 each coordinate Mn(2+).

The protein belongs to the phosphopentomutase family. Mn(2+) serves as cofactor.

It is found in the cytoplasm. It catalyses the reaction 2-deoxy-alpha-D-ribose 1-phosphate = 2-deoxy-D-ribose 5-phosphate. It carries out the reaction alpha-D-ribose 1-phosphate = D-ribose 5-phosphate. It participates in carbohydrate degradation; 2-deoxy-D-ribose 1-phosphate degradation; D-glyceraldehyde 3-phosphate and acetaldehyde from 2-deoxy-alpha-D-ribose 1-phosphate: step 1/2. In terms of biological role, isomerase that catalyzes the conversion of deoxy-ribose 1-phosphate (dRib-1-P) and ribose 1-phosphate (Rib-1-P) to deoxy-ribose 5-phosphate (dRib-5-P) and ribose 5-phosphate (Rib-5-P), respectively. The polypeptide is Phosphopentomutase (Legionella pneumophila (strain Lens)).